Consider the following 90-residue polypeptide: Small ribosomal subunit protein uS15c (90 aa).

The protein belongs to the universal ribosomal protein uS15 family. As to quaternary structure, part of the 30S ribosomal subunit.

The protein localises to the plastid. It is found in the chloroplast. The polypeptide is Small ribosomal subunit protein uS15c (rps15) (Phaseolus vulgaris (Kidney bean)).